The sequence spans 533 residues: Putative phosphate permease jhp_1384 (533 aa).

12 helical membrane passes run 23 to 43 (IALA…FGQA), 47 to 67 (GLLL…IGAN), 81 to 101 (AISM…GAII), 129 to 149 (VMLA…LIGA), 156 to 176 (SVVG…AINW), 182 to 202 (IVAS…FFLM), 221 to 241 (VVPY…IVKV), 248 to 268 (VGFE…FILF), 286 to 306 (VNEL…FAHG), 338 to 358 (VPLW…SLYG), 372 to 392 (LDKM…LLAS), and 509 to 529 (LVTV…LGFI).

Belongs to the inorganic phosphate transporter (PiT) (TC 2.A.20) family.

It is found in the cell membrane. In terms of biological role, potential transporter for phosphate. In Helicobacter pylori (strain J99 / ATCC 700824) (Campylobacter pylori J99), this protein is Putative phosphate permease jhp_1384.